We begin with the raw amino-acid sequence, 908 residues long: MFGKLLTKVFGSRNDRTLKGLQKVVNKINALEADYEKLTDEQLKAKTAEFRERLAAGASLDSIMAEAFATVREASKRVFEMRHFDVQLLGGMVLDSNRIAEMRTGEGKTLTATLPAYLNALTGKGVHVITVNDYLARRDAENNRPLFEFLGLTVGINVAGLSQQAKKDAYNADITYGTNNEFGFDYLRDNMAFSPQERVQRPLHYALIDEVDSILIDEARTPLIISGAAEDSSELYIKINTLIPNLIRQDKEDSEEYVGEGDYSIDEKAKQVHFTERGQEKVENLLIERGMLAEGDSLYSAANISLLHHVNAALRAHTLFERDVDYIVQDGEVIIVDEHTGRTMPGRRWSEGLHQAVEAKEGVRIQNENQTLASITFQNYFRQYEKLAGMTGTADTEAFEFQHIYGLDTVVVPTNRPMVRKDMADLVYLTANEKYQAIIKDIKDCRERGQPVLVGTVSIEQSELLARLMVKEKIPHQVLNAKFHEKEAEIVAQAGRTGAVTIATNMAGRGTDIVLGGNWNMEIEALENPTAEQKAKIKADWQERHDAVVAAGGLHILGTERHESRRIDNQLRGRAGRQGDAGSSRFYLSMEDSLMRIFASDRVSGMMKKLGMEEGEAIEHPWVSRAIENAQRKVEARNFDIRKQLLEFDDVANDQRQVVYAQRNELMDAESIEDTIKNIQDDVISAVIDQYIPPQSVEELWDVPGLEQRLQQEFMLKLPIQEWLDKEDDLHEETLRERIITSWSDAYKAKEEMVGAPVLRQFEKAVMLQTLDGLWKEHLAAMDHLRQGIHLRGYAQKNPKQEYKRESFELFQQLLSTLKHDVISVLSKVQVQAQSDVEEMEARRREEDAKIQRDYQHAAAEALVGGDDGSDEMMAHTPMIRDGDKVGRNDPCPCGSGRKYKQCHGKLS.

ATP contacts are provided by residues Gln-87, 105-109, and Asp-512; that span reads GEGKT. Positions 865 to 908 are disordered; that stretch reads GGDDGSDEMMAHTPMIRDGDKVGRNDPCPCGSGRKYKQCHGKLS. Residues 879-888 show a composition bias toward basic and acidic residues; that stretch reads MIRDGDKVGR. 4 residues coordinate Zn(2+): Cys-892, Cys-894, Cys-903, and His-904. Basic residues predominate over residues 898–908; the sequence is RKYKQCHGKLS.

The protein belongs to the SecA family. Monomer and homodimer. Part of the essential Sec protein translocation apparatus which comprises SecA, SecYEG and auxiliary proteins SecDF-YajC and YidC. Zn(2+) is required as a cofactor.

It is found in the cell inner membrane. It localises to the cytoplasm. The enzyme catalyses ATP + H2O + cellular proteinSide 1 = ADP + phosphate + cellular proteinSide 2.. Part of the Sec protein translocase complex. Interacts with the SecYEG preprotein conducting channel. Has a central role in coupling the hydrolysis of ATP to the transfer of proteins into and across the cell membrane, serving both as a receptor for the preprotein-SecB complex and as an ATP-driven molecular motor driving the stepwise translocation of polypeptide chains across the membrane. In Shewanella sp. (strain MR-7), this protein is Protein translocase subunit SecA.